Consider the following 49-residue polypeptide: uncharacterized protein (49 aa).

It belongs to the ELIP/psbS family.

The protein resides in the plastid. Its subcellular location is the cyanelle. Its function is as follows. Possible role in chlorophyll and/or carotenoid binding. This is an uncharacterized protein from Cyanophora paradoxa.